The following is a 214-amino-acid chain: Probable maleylacetoacetate isomerase (214 aa).

One can recognise a GST N-terminal domain in the interval 4-84 (QKPVLYSYWR…YLEETHPDVP (81 aa)). Residues 14–19 (SSCSWR), Val56, 68–69 (ES), Gln108, and 112–114 (NLK) each bind glutathione. Residues 89–212 (DPIKRAHARA…HPDNQPDTGL (124 aa)) form the GST C-terminal domain.

It belongs to the GST superfamily. Zeta family. Glutathione serves as cofactor.

The protein localises to the cytoplasm. The enzyme catalyses 4-maleylacetoacetate = 4-fumarylacetoacetate. It participates in amino-acid degradation; L-phenylalanine degradation; acetoacetate and fumarate from L-phenylalanine: step 5/6. The chain is Probable maleylacetoacetate isomerase (gst-42) from Caenorhabditis elegans.